Reading from the N-terminus, the 224-residue chain is uncharacterized protein (224 aa).

Positions 1–23 (MKKLLAAGIIGLLTVSIASPSFA) are cleaved as a signal peptide. Residues 31–224 (NVAVLFDGSG…WEKEAQKFTE (194 aa)) form the VWFA domain.

To B.subtilis YwmC.

This is an uncharacterized protein from Bacillus subtilis (strain 168).